The chain runs to 360 residues: Photosystem II protein D1 (360 aa).

3 consecutive transmembrane segments (helical) span residues 29–46 (YIGWFGVLMIPTLLTATS), 118–133 (HFLTGVACYIGREWEL), and 142–156 (WISVAFTAPVAAAAA). H118 is a chlorophyll a binding site. Y126 provides a ligand contact to pheophytin a. The [CaMn4O5] cluster site is built by D170 and E189. A helical transmembrane segment spans residues 197-218 (FHQLGVAGVFGGSLFSAMHGSL). Residue H198 participates in chlorophyll a binding. A quinone is bound by residues H215 and 264-265 (SF). H215 contacts Fe cation. H272 provides a ligand contact to Fe cation. Residues 274–288 (FLGLWPVVGIWLTAL) traverse the membrane as a helical segment. The [CaMn4O5] cluster site is built by H332, E333, D342, and A344. The propeptide occupies 345-360 (SGESLPVALTAPAVNG).

It belongs to the reaction center PufL/M/PsbA/D family. In terms of assembly, PSII is composed of 1 copy each of membrane proteins PsbA, PsbB, PsbC, PsbD, PsbE, PsbF, PsbH, PsbI, PsbJ, PsbK, PsbL, PsbM, PsbT, PsbX, PsbY, PsbZ, Psb30/Ycf12, at least 3 peripheral proteins of the oxygen-evolving complex and a large number of cofactors. It forms dimeric complexes. It depends on The D1/D2 heterodimer binds P680, chlorophylls that are the primary electron donor of PSII, and subsequent electron acceptors. It shares a non-heme iron and each subunit binds pheophytin, quinone, additional chlorophylls, carotenoids and lipids. D1 provides most of the ligands for the Mn4-Ca-O5 cluster of the oxygen-evolving complex (OEC). There is also a Cl(-1) ion associated with D1 and D2, which is required for oxygen evolution. The PSII complex binds additional chlorophylls, carotenoids and specific lipids. as a cofactor. Post-translationally, tyr-161 forms a radical intermediate that is referred to as redox-active TyrZ, YZ or Y-Z. In terms of processing, C-terminally processed by CTPA; processing is essential to allow assembly of the oxygen-evolving complex and thus photosynthetic growth.

The protein localises to the plastid. It is found in the chloroplast thylakoid membrane. It carries out the reaction 2 a plastoquinone + 4 hnu + 2 H2O = 2 a plastoquinol + O2. In terms of biological role, photosystem II (PSII) is a light-driven water:plastoquinone oxidoreductase that uses light energy to abstract electrons from H(2)O, generating O(2) and a proton gradient subsequently used for ATP formation. It consists of a core antenna complex that captures photons, and an electron transfer chain that converts photonic excitation into a charge separation. The D1/D2 (PsbA/PsbD) reaction center heterodimer binds P680, the primary electron donor of PSII as well as several subsequent electron acceptors. The polypeptide is Photosystem II protein D1 (Pyropia yezoensis (Susabi-nori)).